The primary structure comprises 155 residues: Peptide deformylase 2 (155 aa).

Fe cation-binding residues include cysteine 90 and histidine 132. Glutamate 133 is an active-site residue. Histidine 136 contributes to the Fe cation binding site.

The protein belongs to the polypeptide deformylase family. Fe(2+) serves as cofactor.

The catalysed reaction is N-terminal N-formyl-L-methionyl-[peptide] + H2O = N-terminal L-methionyl-[peptide] + formate. Its function is as follows. Removes the formyl group from the N-terminal Met of newly synthesized proteins. Requires at least a dipeptide for an efficient rate of reaction. N-terminal L-methionine is a prerequisite for activity but the enzyme has broad specificity at other positions. The polypeptide is Peptide deformylase 2 (Clostridium perfringens (strain 13 / Type A)).